We begin with the raw amino-acid sequence, 186 residues long: Small ribosomal subunit protein uS7 (186 aa).

Belongs to the universal ribosomal protein uS7 family. Part of the 30S ribosomal subunit.

Its function is as follows. One of the primary rRNA binding proteins, it binds directly to 16S rRNA where it nucleates assembly of the head domain of the 30S subunit. Is located at the subunit interface close to the decoding center. The chain is Small ribosomal subunit protein uS7 from Methanothermobacter thermautotrophicus (strain ATCC 29096 / DSM 1053 / JCM 10044 / NBRC 100330 / Delta H) (Methanobacterium thermoautotrophicum).